Consider the following 242-residue polypeptide: Putative pyrimidine-specific ribonucleoside hydrolase RihB (242 aa).

Substrate-binding residues include Q156 and H168.

It belongs to the IUNH family. RihB subfamily.

The catalysed reaction is a pyrimidine ribonucleoside + H2O = a pyrimidine nucleobase + D-ribose. The sequence is that of Putative pyrimidine-specific ribonucleoside hydrolase RihB (rihB) from Shigella boydii serotype 4 (strain Sb227).